The sequence spans 471 residues: Putative multidrug resistance protein MdtD (471 aa).

Residues 1 to 11 lie on the Periplasmic side of the membrane; it reads MTDLPDSTRWR. The helical transmembrane segment at 12 to 32 threads the bilayer; sequence LWIVAFGFFMQSLDTTIVNTA. Residues 33 to 48 are Cytoplasmic-facing; the sequence is LPSMAQSLGESPLHMH. A helical transmembrane segment spans residues 49-69; sequence MVIVSYVLTVAVMLPASGWLA. At 70–76 the chain is on the periplasmic side; sequence DKVGVRN. A helical membrane pass occupies residues 77–97; sequence IFFTAIVLFTLGSLFCALSGT. At 98–101 the chain is on the cytoplasmic side; the sequence is LNEL. A helical membrane pass occupies residues 102-124; that stretch reads LLARALQGVGGAMMVPVGRLTVM. Over 125 to 137 the chain is Periplasmic; it reads KIVPREQYMAAMT. The helical transmembrane segment at 138–158 threads the bilayer; the sequence is FVTLPGQVGPLLGPALGGLLV. The Cytoplasmic segment spans residues 159–164; sequence EYASWH. A helical transmembrane segment spans residues 165 to 185; the sequence is WIFLINIPVGIIGAIATLMLM. The Periplasmic segment spans residues 186-196; the sequence is PNYTMQTRRFD. Residues 197–217 traverse the membrane as a helical segment; it reads LSGFLLLAVGMAVLTLALDGS. Residues 218–224 lie on the Cytoplasmic side of the membrane; it reads KGTGLSP. The helical transmembrane segment at 225–245 threads the bilayer; it reads LAIAGLVAVGVVALVLYLLHA. Topologically, residues 246–262 are periplasmic; that stretch reads QNNNRALFSLKLFRTRT. Residues 263 to 283 form a helical membrane-spanning segment; sequence FSLGLAGSFAGRIGSGMLPFM. Residues 284–285 lie on the Cytoplasmic side of the membrane; sequence TP. The chain crosses the membrane as a helical span at residues 286–306; it reads VFLQIGLGFSPFHAGLMMIPM. The Periplasmic segment spans residues 307-341; that stretch reads VLGSMGMKRIVVQVVNRFGYRRVLVATTLGLSLVT. A helical membrane pass occupies residues 342-362; the sequence is LLFMTTALLGWYYVLPFVLFL. The Cytoplasmic segment spans residues 363–395; it reads QGMVNSTRFSSMNTLTLKDLPDNLASSGNSLLS. A helical membrane pass occupies residues 396–416; that stretch reads MIMQLSMSIGVTIAGLLLGLF. The Periplasmic portion of the chain corresponds to 417 to 430; that stretch reads GSQHVSVDSGTTQT. A helical transmembrane segment spans residues 431 to 451; it reads VFMYTWLSMASIIALPAFIFA. Over 452-471 the chain is Cytoplasmic; the sequence is RVPNDTHQNVAISRRKRSAQ.

This sequence belongs to the major facilitator superfamily. TCR/Tet family.

The protein localises to the cell inner membrane. The chain is Putative multidrug resistance protein MdtD from Escherichia coli O6:K15:H31 (strain 536 / UPEC).